A 109-amino-acid chain; its full sequence is Large ribosomal subunit protein uL22 (109 aa).

It belongs to the universal ribosomal protein uL22 family. As to quaternary structure, part of the 50S ribosomal subunit.

This protein binds specifically to 23S rRNA; its binding is stimulated by other ribosomal proteins, e.g. L4, L17, and L20. It is important during the early stages of 50S assembly. It makes multiple contacts with different domains of the 23S rRNA in the assembled 50S subunit and ribosome. In terms of biological role, the globular domain of the protein is located near the polypeptide exit tunnel on the outside of the subunit, while an extended beta-hairpin is found that lines the wall of the exit tunnel in the center of the 70S ribosome. The chain is Large ribosomal subunit protein uL22 from Methylibium petroleiphilum (strain ATCC BAA-1232 / LMG 22953 / PM1).